A 567-amino-acid chain; its full sequence is Urease subunit alpha (567 aa).

In terms of domain architecture, Urease spans 129 to 567; sequence GGVDTHIHFI…LPMAQRYFLF (439 aa). Histidine 134, histidine 136, and lysine 217 together coordinate Ni(2+). N6-carboxylysine is present on lysine 217. Histidine 219 lines the substrate pocket. Residues histidine 246 and histidine 272 each coordinate Ni(2+). Catalysis depends on histidine 320, which acts as the Proton donor. Aspartate 360 contacts Ni(2+).

The protein belongs to the metallo-dependent hydrolases superfamily. Urease alpha subunit family. In terms of assembly, heterotrimer of UreA (gamma), UreB (beta) and UreC (alpha) subunits. Three heterotrimers associate to form the active enzyme. Ni cation is required as a cofactor. Post-translationally, carboxylation allows a single lysine to coordinate two nickel ions.

The protein localises to the cytoplasm. It catalyses the reaction urea + 2 H2O + H(+) = hydrogencarbonate + 2 NH4(+). Its pathway is nitrogen metabolism; urea degradation; CO(2) and NH(3) from urea (urease route): step 1/1. The chain is Urease subunit alpha from Aliivibrio fischeri (strain MJ11) (Vibrio fischeri).